A 283-amino-acid chain; its full sequence is uncharacterized protein (283 aa).

3 Solcar repeats span residues Gln-14–Leu-95, Asn-102–Val-185, and Gly-190–Gly-274. 6 helical membrane passes run Thr-20–Ile-40, Gly-70–Ser-90, Ala-105–Leu-125, Phe-157–Met-177, Ala-184–Ala-204, and Gly-249–Leu-266.

Belongs to the mitochondrial carrier (TC 2.A.29) family.

The protein resides in the mitochondrion inner membrane. This is an uncharacterized protein from Schizosaccharomyces pombe (strain 972 / ATCC 24843) (Fission yeast).